The sequence spans 150 residues: Avidin-related protein 7 (150 aa).

An N-terminal signal peptide occupies residues 1–24 (MVHATSPLLLLLLLSLALVAPGLS). Residues 26 to 147 (RKCSLTGEWD…GYNNFTRQRT (122 aa)) enclose the Avidin-like domain. Cys-28 and Cys-105 form a disulfide bridge. 2 residues coordinate biotin: Asn-36 and Ser-40. Residues Asn-41 and Asn-54 are each glycosylated (N-linked (GlcNAc...) asparagine). Residues Tyr-57, Thr-59, and Asp-63 each contribute to the biotin site. N-linked (GlcNAc...) asparagine glycosylation is present at Asn-93. Ser-95, Ser-99, and Asn-140 together coordinate biotin. N-linked (GlcNAc...) asparagine glycosylation occurs at Asn-141.

The protein belongs to the avidin/streptavidin family. Homotetramer. Post-translationally, glycosylated.

It is found in the secreted. Its function is as follows. Forms a strong non-covalent specific complex with biotin. The polypeptide is Avidin-related protein 7 (AVR7) (Gallus gallus (Chicken)).